Consider the following 222-residue polypeptide: 3-dehydroquinate dehydratase (222 aa).

3-dehydroquinate-binding positions include 29 to 31 (ELR) and R55. H112 (proton donor/acceptor) is an active-site residue. Catalysis depends on K139, which acts as the Schiff-base intermediate with substrate. 3-dehydroquinate is bound by residues R178, S199, and Q203.

It belongs to the type-I 3-dehydroquinase family. Homodimer.

The catalysed reaction is 3-dehydroquinate = 3-dehydroshikimate + H2O. It participates in metabolic intermediate biosynthesis; chorismate biosynthesis; chorismate from D-erythrose 4-phosphate and phosphoenolpyruvate: step 3/7. Involved in the third step of the chorismate pathway, which leads to the biosynthesis of aromatic amino acids. Catalyzes the cis-dehydration of 3-dehydroquinate (DHQ) and introduces the first double bond of the aromatic ring to yield 3-dehydroshikimate. The polypeptide is 3-dehydroquinate dehydratase (Dehalococcoides mccartyi (strain ATCC BAA-2266 / KCTC 15142 / 195) (Dehalococcoides ethenogenes (strain 195))).